Consider the following 178-residue polypeptide: MGTQVVTARPGSASCILGIDPGLNTTGYAVISREGPRLCLREAGVIKSRRSDTLPERLREIHVGLSEVFAVHAVDLMALEQLFSHYDRPRTAILMGHARGVICLAAASAGVPVEHYEPTRVKKVMTGNGRAPKSQIQLAVKMQLNLQSVPEPADVADAMAISLCGHYLANNPIDQALA.

Active-site residues include aspartate 20, glutamate 80, and aspartate 154. Aspartate 20, glutamate 80, and aspartate 154 together coordinate Mg(2+).

Belongs to the RuvC family. Homodimer which binds Holliday junction (HJ) DNA. The HJ becomes 2-fold symmetrical on binding to RuvC with unstacked arms; it has a different conformation from HJ DNA in complex with RuvA. In the full resolvosome a probable DNA-RuvA(4)-RuvB(12)-RuvC(2) complex forms which resolves the HJ. Requires Mg(2+) as cofactor.

Its subcellular location is the cytoplasm. The enzyme catalyses Endonucleolytic cleavage at a junction such as a reciprocal single-stranded crossover between two homologous DNA duplexes (Holliday junction).. In terms of biological role, the RuvA-RuvB-RuvC complex processes Holliday junction (HJ) DNA during genetic recombination and DNA repair. Endonuclease that resolves HJ intermediates. Cleaves cruciform DNA by making single-stranded nicks across the HJ at symmetrical positions within the homologous arms, yielding a 5'-phosphate and a 3'-hydroxyl group; requires a central core of homology in the junction. The consensus cleavage sequence is 5'-(A/T)TT(C/G)-3'. Cleavage occurs on the 3'-side of the TT dinucleotide at the point of strand exchange. HJ branch migration catalyzed by RuvA-RuvB allows RuvC to scan DNA until it finds its consensus sequence, where it cleaves and resolves the cruciform DNA. The protein is Crossover junction endodeoxyribonuclease RuvC of Rhodopirellula baltica (strain DSM 10527 / NCIMB 13988 / SH1).